The following is a 398-amino-acid chain: uncharacterized protein (398 aa).

Positions 240-306 constitute a BIG2 domain; it reads SLNKNIDQLI…SITVTTNDGS (67 aa).

This is an uncharacterized protein from Clostridium acetobutylicum (strain ATCC 824 / DSM 792 / JCM 1419 / IAM 19013 / LMG 5710 / NBRC 13948 / NRRL B-527 / VKM B-1787 / 2291 / W).